We begin with the raw amino-acid sequence, 498 residues long: Probable FAD-binding monooxygenase AlmA (498 aa).

Residues 4-24 (HIDILIVGAGISGIGIAAHLS) traverse the membrane as a helical segment. FAD is bound by residues Ser-15, Glu-36, Asp-56, Phe-62, and Val-104. 54-56 (RSD) contacts NADP(+). NADP(+) contacts are provided by residues 184–190 (SGATAIT), 208–209 (RS), and 292–293 (RL). Val-395 contributes to the FAD binding site.

It belongs to the FAD-binding monooxygenase family. The cofactor is FAD.

It localises to the cell membrane. It functions in the pathway hydrocarbon metabolism; alkane degradation. Functionally, is able to catalyze the degradation of n-alkanes with C chain lengths of 32 and 36. Probably allows Acinetobacter baylyi strain ADP1 to grow on the long-chain n-alkane dotriacontane (C32H66) as a sole carbon source. In Acinetobacter baylyi (strain ATCC 33305 / BD413 / ADP1), this protein is Probable FAD-binding monooxygenase AlmA.